Consider the following 708-residue polypeptide: Solute carrier family 15 member 1 (708 aa).

A helical transmembrane segment spans residues 1-21 (MGMSKSYGCFGYPLSIFFIVV). Residues 22–53 (NEFCERFSYYGMRALLILYFRRFIGWDDNLST) are Extracellular-facing. N-linked (GlcNAc...) asparagine glycosylation is present at asparagine 50. A helical transmembrane segment spans residues 54-74 (AIYHTFVALCYLTPILGALIA). The Cytoplasmic portion of the chain corresponds to 75 to 82 (DSWLGKFK). Residues 83 to 103 (TIVSLSIVYTIGQAVTAVSSI) traverse the membrane as a helical segment. The Extracellular portion of the chain corresponds to 104–118 (NDLTDYNKDGTPDNL). An N-linked (GlcNAc...) asparagine glycan is attached at asparagine 117. Residues 119 to 139 (SVHVALSMIGLALIALGTGGI) traverse the membrane as a helical segment. At 140–161 (KPCVSAFGGDQFEEGQEKQRNR) the chain is on the cytoplasmic side. The chain crosses the membrane as a helical span at residues 162 to 182 (FFSIFYLAINAGSLISTIVTP). Topologically, residues 183–198 (MLRVHECGIYSQKACY) are extracellular. Residues 199-219 (PLAFGVPAALMAVSLIVFVIG) traverse the membrane as a helical segment. At 220 to 276 (SGMYKKFQPQGNVMGKVVKCIGFALKNRFRHRSKQFPKREHWLDWAKEKYDERLISQ) the chain is on the cytoplasmic side. Residues 277–297 (IKMVTKVMFLYIPLPMFWALF) traverse the membrane as a helical segment. Over 298-327 (DQQGSRWTLQATAMSGKIGLLEVQPDQMQT) the chain is Extracellular. The helical transmembrane segment at 328-348 (VNAILIVVMVPIMDAVVYPLI) threads the bilayer. The Cytoplasmic segment spans residues 349 to 361 (AKCGFNFTSLKRM). Residues 362–382 (TVGMFLASMAFVMAAIVQLEI) traverse the membrane as a helical segment. Residues 383–584 (DKTLPVFPKQ…ISPNTVNMAL (202 aa)) are Extracellular-facing. Residues 383-585 (DKTLPVFPKQ…SPNTVNMALQ (203 aa)) are extracellular domain (ECD). N-linked (GlcNAc...) asparagine glycosylation is found at asparagine 408, asparagine 439, asparagine 495, asparagine 499, asparagine 509, asparagine 514, asparagine 527, and asparagine 539. The helical transmembrane segment at 585-605 (QIPQYFLITCGEVVFSVTGLE) threads the bilayer. Residues 606–619 (FSYSQAPSNMKSVL) are Cytoplasmic-facing. A helical transmembrane segment spans residues 620-640 (QAGWLLTVAVGNIIVLIVAGA). Over 641–645 (GQFSE) the chain is Extracellular. Residues 646–666 (QWAEYILFAALLLVVCVIFAI) traverse the membrane as a helical segment. At 667–708 (MARFYTYVNPAEIEAQFDDDEKKNLEKMNVYSTVTPVSQTQM) the chain is on the cytoplasmic side.

It belongs to the major facilitator superfamily. Proton-dependent oligopeptide transporter (POT/PTR) (TC 2.A.17) family. As to quaternary structure, interacts (via extracellular domain region) with trypsin.

Its subcellular location is the apical cell membrane. The enzyme catalyses a dipeptide(out) + H(+)(out) = a dipeptide(in) + H(+)(in). It carries out the reaction an L-amino acid tripeptide(out) + H(+)(out) = an L-amino acid tripeptide(in) + H(+)(in). It catalyses the reaction L-alanyl-L-lysine(out) + H(+)(out) = L-alanyl-L-lysine(in) + H(+)(in). The catalysed reaction is L-alanyl-L-proline(out) + H(+)(out) = L-alanyl-L-proline(in) + H(+)(in). The enzyme catalyses L-alanyl-L-valine(out) + H(+)(out) = L-alanyl-L-valine(in) + H(+)(in). It carries out the reaction carnosine(out) + H(+)(out) = carnosine(in) + H(+)(in). It catalyses the reaction glycyl-L-glutamine(out) + H(+)(out) = glycyl-L-glutamine(in) + H(+)(in). The catalysed reaction is glycyl-L-leucine(out) + H(+)(out) = glycyl-L-leucine(in) + H(+)(in). The enzyme catalyses glycyl-L-proline(out) + H(+)(out) = glycyl-L-proline(in) + H(+)(in). It carries out the reaction glycyl-sarcosine(out) + H(+)(out) = glycyl-sarcosine(in) + H(+)(in). It catalyses the reaction L-leucyl-L-leucine(out) + H(+)(out) = L-leucyl-L-leucine(in) + H(+)(in). The catalysed reaction is L-leucyl-L-proline(out) + H(+)(out) = L-leucyl-L-proline(in) + H(+)(in). The enzyme catalyses L-phenylalanyl-L-leucine(out) + H(+)(out) = L-phenylalanyl-L-leucine(in) + H(+)(in). It carries out the reaction L-phenylalanyl-L-phenylalanine(out) + H(+)(out) = L-phenylalanyl-L-phenylalanine(in) + H(+)(in). It catalyses the reaction L-lysyl-glycine(out) + H(+)(out) = L-lysyl-glycine(in) + H(+)(in). The catalysed reaction is L-tyrosylglycine(out) + H(+)(out) = L-tyrosylglycine(in) + H(+)(in). The enzyme catalyses L-alanyl-L-aspartate(out) + 2 H(+)(out) = L-alanyl-L-aspartate(in) + 2 H(+)(in). It carries out the reaction L-aspartyl-glycine(out) + 2 H(+)(out) = L-aspartyl-glycine(in) + 2 H(+)(in). It catalyses the reaction glycyl-L-aspartate(out) + 2 H(+)(out) = glycyl-L-aspartate(in) + 2 H(+)(in). The catalysed reaction is glycyl-L-glutamate(out) + 2 H(+)(out) = glycyl-L-glutamate(in) + 2 H(+)(in). The enzyme catalyses L-alanyl-L-leucyl-L-alanine(out) + H(+)(out) = L-alanyl-L-leucyl-L-alanine(in) + H(+)(in). It carries out the reaction L-alanyl-L-prolylglycine(out) + H(+)(out) = L-alanyl-L-prolylglycine(in) + H(+)(in). It catalyses the reaction glycylglycyl-L-isoleucine(out) + H(+)(out) = glycylglycyl-L-isoleucine(in) + H(+)(in). The catalysed reaction is glycylglycyl-L-proline(out) + H(+)(out) = glycylglycyl-L-proline(in) + H(+)(in). The enzyme catalyses L-methionyl-L-phenylalanyl-L-methionine(out) + H(+)(out) = L-methionyl-L-phenylalanyl-L-methionine(in) + H(+)(in). It carries out the reaction N-acetyl-D-muramoyl-L-alanyl-D-isoglutamine(out) + 2 H(+)(out) = N-acetyl-D-muramoyl-L-alanyl-D-isoglutamine(in) + 2 H(+)(in). It catalyses the reaction N(alpha)-formyl-L-methionyl-L-leucyl-L-phenylalanine(out) + 2 H(+)(out) = N(alpha)-formyl-L-methionyl-L-leucyl-L-phenylalanine(in) + 2 H(+)(in). In terms of biological role, electrogenic proton-coupled amino-acid transporter that transports oligopeptides of 2 to 4 amino acids with a preference for dipeptides. Transports neutral and monovalently charged peptides with a proton to peptide stoichiometry of 1:1 or 2:1. Primarily responsible for the absorption of dietary di- and tripeptides from the small intestinal lumen. Mediates transepithelial transport of muramyl and N-formylated bacterial dipeptides contributing to recognition of pathogenic bacteria by the mucosal immune system. The protein is Solute carrier family 15 member 1 (SLC15A1) of Canis lupus familiaris (Dog).